The following is a 551-amino-acid chain: MADGVDHIDIYADVGEEFNQEAEYGGHDQIDLYDDVISPSANNGDAPEDRDYMDSLPPSVGDDVGKGAAPNVVYTYTGKRIALYIGNLTWWTTDEDLTEAVHSLGVNDILEIKFFENRANGQSKGFALVGVGSEASSKKLMDLLPKRELHGQNPVVTPCNKQFLSQFEMQSRKTTQSGQMSGEGKAGPPGGSSRAAFPPSNRGRGRFPGAIPGGDRFPGPAGPGGPPHRSQLDKLPTRPPLGPPGPPGPPGPPPPGQVLPPPLAGPPNRGDRPPPPVLFPGQPFGQPPLGPLPPGPPPPVPGYGPPPGPPPPQQGPPPPPGPFPPRPPGPLGPPLTLAPPPHLPGPPPGAPPPAPHVNPAFFPPPANSGIPTSDSRGPPPTDPYGRPPPYDRGDYGPPGREMDAARTPLSEAEFEEIMNRNRAISSSAISRAVSDASAGDYGSAIETLVTAISLIKQSKVSADDRCKVLISSLQDCLHGIESKSYGSGSRRERSRERDHSRSREKSRRHKSRSRDRHDDYYRERSRERERHRDRDRDRDRERDREREYRHR.

Positions 81-161 (IALYIGNLTW…QNPVVTPCNK (81 aa)) constitute an RRM domain. Position 157 is a phosphothreonine (Thr157). Residues 169–180 (MQSRKTTQSGQM) show a composition bias toward polar residues. Disordered regions lie at residues 169 to 410 (MQSR…TPLS) and 477 to 551 (LHGI…YRHR). Composition is skewed to pro residues over residues 237–265 (TRPP…PLAG), 285–366 (GQPP…PPPA), and 377–388 (GPPPTDPYGRPP). Basic and acidic residues-rich tracts occupy residues 389–404 (PYDR…EMDA) and 489–503 (SRRE…SRSR). Phosphoserine occurs at positions 494, 500, 511, 513, and 525. Residues 504–514 (EKSRRHKSRSR) show a composition bias toward basic residues. Over residues 515-551 (DRHDDYYRERSRERERHRDRDRDRDRERDREREYRHR) the composition is skewed to basic and acidic residues.

It belongs to the RRM CPSF6/7 family. As to quaternary structure, component of the cleavage factor Im (CFIm) complex.

Its subcellular location is the nucleus. It is found in the nucleoplasm. The protein localises to the nucleus speckle. The protein resides in the cytoplasm. Functionally, component of the cleavage factor Im (CFIm) complex that functions as an activator of the pre-mRNA 3'-end cleavage and polyadenylation processing required for the maturation of pre-mRNA into functional mRNAs. CFIm contributes to the recruitment of multiprotein complexes on specific sequences on the pre-mRNA 3'-end, so called cleavage and polyadenylation signals (pA signals). Most pre-mRNAs contain multiple pA signals, resulting in alternative cleavage and polyadenylation (APA) producing mRNAs with variable 3'-end formation. The CFIm complex acts as a key regulator of cleavage and polyadenylation site choice during APA through its binding to 5'-UGUA-3' elements localized in the 3'-untranslated region (UTR) for a huge number of pre-mRNAs. Plays a role in mRNA export. The chain is Cleavage and polyadenylation specificity factor subunit 6 from Gallus gallus (Chicken).